Consider the following 488-residue polypeptide: Ribulose bisphosphate carboxylase large chain (488 aa).

Substrate-binding residues include asparagine 127 and threonine 177. The active-site Proton acceptor is the lysine 179. Position 181 (lysine 181) interacts with substrate. Lysine 205, aspartate 207, and glutamate 208 together coordinate Mg(2+). Lysine 205 bears the N6-carboxylysine mark. Histidine 297 functions as the Proton acceptor in the catalytic mechanism. Arginine 298, histidine 330, and serine 382 together coordinate substrate.

The protein belongs to the RuBisCO large chain family. Type I subfamily. In terms of assembly, heterohexadecamer of 8 large chains and 8 small chains. Requires Mg(2+) as cofactor.

Its subcellular location is the plastid. The protein localises to the chloroplast. The enzyme catalyses 2 (2R)-3-phosphoglycerate + 2 H(+) = D-ribulose 1,5-bisphosphate + CO2 + H2O. The catalysed reaction is D-ribulose 1,5-bisphosphate + O2 = 2-phosphoglycolate + (2R)-3-phosphoglycerate + 2 H(+). RuBisCO catalyzes two reactions: the carboxylation of D-ribulose 1,5-bisphosphate, the primary event in carbon dioxide fixation, as well as the oxidative fragmentation of the pentose substrate in the photorespiration process. Both reactions occur simultaneously and in competition at the same active site. This is Ribulose bisphosphate carboxylase large chain from Gracilaria tenuistipitata var. liui (Red alga).